A 20-amino-acid chain; its full sequence is Thrombin-like enzyme Cdc SII (20 aa).

The protein belongs to the peptidase S1 family. Snake venom subfamily. Monomer. As to expression, expressed by the venom gland.

Its subcellular location is the secreted. With respect to regulation, strongly inhibited by PMSF and moderately inhibited by leupeptin. Not inhibited by EDTA, aprotinin, pepstatin, and bestatin. Thrombin-like snake venom serine protease that coagulates human plasma and bovine fibrinogen by hydrolysis of the alpha chains (FGA) (minimum coagulation dose is 60 ug on fibrinogen). Has fibrinogenolytic activities, and degrades preferentially the Aalpha chain (FGA). Shows amidolytic activity toward N-benzoyl-L-Arg-p-nitroanilide, has a higher activity than Cdc SI. In vivo, intravenous injection induces defibrin(ogen)ation and a loss of the righting reflex and opisthotoxins, together with a typical gyroxin-like effect (18-20 minutes). Subcutaneous injection into the footpads induces moderate edema. Potentiates local hemorrhagic activity induced by metalloproteinases (BaP1). The sequence is that of Thrombin-like enzyme Cdc SII from Crotalus durissus cumanensis (South American rattlesnake).